A 543-amino-acid chain; its full sequence is CTP synthase (543 aa).

The interval 1 to 265 (MARFIFITGG…DSEVLRAFGI (265 aa)) is amidoligase domain. S13 provides a ligand contact to CTP. Residue S13 coordinates UTP. 14–19 (SLGKGL) provides a ligand contact to ATP. Y54 contributes to the L-glutamine binding site. D71 serves as a coordination point for ATP. 2 residues coordinate Mg(2+): D71 and E139. CTP-binding positions include 146-148 (DIE), 186-191 (KTKPTQ), and K222. UTP is bound by residues 186 to 191 (KTKPTQ) and K222. The Glutamine amidotransferase type-1 domain maps to 291 to 542 (TIGVVGKYVS…IEAAVKQSRL (252 aa)). Residue G354 coordinates L-glutamine. C381 acts as the Nucleophile; for glutamine hydrolysis in catalysis. L-glutamine contacts are provided by residues 382–385 (LGMQ), E405, and R470. Residues H515 and E517 contribute to the active site.

The protein belongs to the CTP synthase family. As to quaternary structure, homotetramer.

It carries out the reaction UTP + L-glutamine + ATP + H2O = CTP + L-glutamate + ADP + phosphate + 2 H(+). It catalyses the reaction L-glutamine + H2O = L-glutamate + NH4(+). The catalysed reaction is UTP + NH4(+) + ATP = CTP + ADP + phosphate + 2 H(+). The protein operates within pyrimidine metabolism; CTP biosynthesis via de novo pathway; CTP from UDP: step 2/2. Allosterically activated by GTP, when glutamine is the substrate; GTP has no effect on the reaction when ammonia is the substrate. The allosteric effector GTP functions by stabilizing the protein conformation that binds the tetrahedral intermediate(s) formed during glutamine hydrolysis. Inhibited by the product CTP, via allosteric rather than competitive inhibition. Functionally, catalyzes the ATP-dependent amination of UTP to CTP with either L-glutamine or ammonia as the source of nitrogen. Regulates intracellular CTP levels through interactions with the four ribonucleotide triphosphates. The chain is CTP synthase from Sphingopyxis alaskensis (strain DSM 13593 / LMG 18877 / RB2256) (Sphingomonas alaskensis).